A 200-amino-acid chain; its full sequence is DNA dC-&gt;dU-editing enzyme APOBEC-3H (200 aa).

One can recognise a CMP/dCMP-type deaminase domain in the interval 4–126 (LTAETFRLQF…KPQQKGLRLL (123 aa)). Histidine 54 lines the Zn(2+) pocket. The active-site Proton donor is the glutamate 56. Positions 85 and 88 each coordinate Zn(2+). Residues 160-182 (YKMLEELDKNSRAIKRRLERIKI) are a coiled coil.

It belongs to the cytidine and deoxycytidylate deaminase family. As to quaternary structure, homodimer. Interacts with AGO1, AGO2 and AGO3. Zn(2+) is required as a cofactor. (Microbial infection) Following infection by some HIV-1 strains, such as isolate BRU/LAI, can be ubiquitinated by a cullin-5-RING E3 ubiquitin-protein ligase complex (ECS complex) hijacked by the HIV-1 Vif protein, leading to its degradation. Ubiquitination by the ECS complex is however less efficent compared to APOBEC3G or APOBEC3G. Expressed in lymphoid organs. Also detected in non-lymphoid tissues including lung, testis, ovary, fetal liver and skin.

It localises to the cytoplasm. The protein localises to the nucleus. The protein resides in the P-body. The enzyme catalyses a 2'-deoxycytidine in single-stranded DNA + H2O + H(+) = a 2'-deoxyuridine in single-stranded DNA + NH4(+). Its activity is regulated as follows. APOBEC3H activity is regulated by RNA. While RNA-binding inhibits the DNA deaminase activity, double-stranded RNA is required for HIV-1 restriction by promoting APOBEC3H homodimerization and packaging into retroviral nucleocapsids. (Microbial infection) Antiviral activity is inhibited to some extent by the HIV-1 virion infectivity factor (VIF), that prevents its incorporation into progeny virions by both inhibiting its translation and/or by inducing its ubiquitination and subsequent degradation by the 26S proteasome. Its function is as follows. DNA deaminase (cytidine deaminase) which acts as an inhibitor of retrovirus replication and retrotransposon mobility via deaminase-dependent and -independent mechanisms. The A3H-var/haplotype 2 exhibits antiviral activity against vif-deficient HIV-1. After the penetration of retroviral nucleocapsids into target cells of infection and the initiation of reverse transcription, it can induce the conversion of cytosine to uracil in the minus-sense single-strand viral DNA, leading to G-to-A hypermutations in the subsequent plus-strand viral DNA. The resultant detrimental levels of mutations in the proviral genome, along with a deamination-independent mechanism that works prior to the proviral integration, together exert efficient antiretroviral effects in infected target cells. Selectively targets single-stranded DNA and does not deaminate double-stranded DNA or single- or double-stranded RNA. Exhibits antiviral activity also against T-cell leukemia virus type 1 (HTLV-1) and may inhibit the mobility of LTR and non-LTR retrotransposons. This Homo sapiens (Human) protein is DNA dC-&gt;dU-editing enzyme APOBEC-3H.